The chain runs to 123 residues: Fluoride-specific ion channel FluC 2 (123 aa).

4 consecutive transmembrane segments (helical) span residues 3 to 23 (LDGF…RMFI), 38 to 58 (ILIV…LNIT), 62 to 82 (LILF…SFIY), and 94 to 114 (LILL…FCLG). Positions 72 and 75 each coordinate Na(+).

Belongs to the fluoride channel Fluc/FEX (TC 1.A.43) family.

It localises to the cell inner membrane. It carries out the reaction fluoride(in) = fluoride(out). With respect to regulation, na(+) is not transported, but it plays an essential structural role and its presence is essential for fluoride channel function. Functionally, fluoride-specific ion channel. Important for reducing fluoride concentration in the cell, thus reducing its toxicity. This is Fluoride-specific ion channel FluC 2 from Prochlorococcus marinus subsp. pastoris (strain CCMP1986 / NIES-2087 / MED4).